The following is a 729-amino-acid chain: Fatty acid oxidation complex subunit alpha (729 aa).

An enoyl-CoA hydratase/isomerase region spans residues 1–189 (MLYKGDTLYL…KIGLVDGVVK (189 aa)). Asp-296 contacts substrate. The segment at 311–729 (ETPKQAAVLG…ARAVGDLKTA (419 aa)) is 3-hydroxyacyl-CoA dehydrogenase. NAD(+) contacts are provided by residues Met-324, Asp-343, 400 to 402 (VVE), Lys-407, and Ser-429. The active-site For 3-hydroxyacyl-CoA dehydrogenase activity is the His-450. Asn-453 serves as a coordination point for NAD(+). Substrate is bound by residues Asn-500 and Tyr-660.

The protein in the N-terminal section; belongs to the enoyl-CoA hydratase/isomerase family. This sequence in the C-terminal section; belongs to the 3-hydroxyacyl-CoA dehydrogenase family. In terms of assembly, heterotetramer of two alpha chains (FadB) and two beta chains (FadA).

The catalysed reaction is a (3S)-3-hydroxyacyl-CoA + NAD(+) = a 3-oxoacyl-CoA + NADH + H(+). It catalyses the reaction a (3S)-3-hydroxyacyl-CoA = a (2E)-enoyl-CoA + H2O. It carries out the reaction a 4-saturated-(3S)-3-hydroxyacyl-CoA = a (3E)-enoyl-CoA + H2O. The enzyme catalyses (3S)-3-hydroxybutanoyl-CoA = (3R)-3-hydroxybutanoyl-CoA. The catalysed reaction is a (3Z)-enoyl-CoA = a 4-saturated (2E)-enoyl-CoA. It catalyses the reaction a (3E)-enoyl-CoA = a 4-saturated (2E)-enoyl-CoA. Its pathway is lipid metabolism; fatty acid beta-oxidation. In terms of biological role, involved in the aerobic and anaerobic degradation of long-chain fatty acids via beta-oxidation cycle. Catalyzes the formation of 3-oxoacyl-CoA from enoyl-CoA via L-3-hydroxyacyl-CoA. It can also use D-3-hydroxyacyl-CoA and cis-3-enoyl-CoA as substrate. The sequence is that of Fatty acid oxidation complex subunit alpha from Escherichia fergusonii (strain ATCC 35469 / DSM 13698 / CCUG 18766 / IAM 14443 / JCM 21226 / LMG 7866 / NBRC 102419 / NCTC 12128 / CDC 0568-73).